Reading from the N-terminus, the 305-residue chain is MSTPSPAAAPSREEWLAKARTLSEALPFMRRYAGRTVVVKYGGHAMGDESLGRRFANDIVLMKQMGISPVVVHGGGPQIGQMLERLKIKSEFVDGLRVTDKETVEIAEMVLSGSINKQIVALINDAGGDAVGLSGKDDDLIEARKVTRSKRDPDSNIEKVIDLGFVGDPFRVNPGLLHKLQQADIIPVIAPIGIGEDGQTYNINADTAAGAIAAAVNATRLLLLTDVAGVLDKQKRLIPEMSVEAAQRAIDDGTATGGMIPKIETCLRAVNGGVEAAVILDGRVPHAIVLELFTEGGAGTLIGRK.

Residues 75–76 (GG), arginine 97, and asparagine 202 each bind substrate.

The protein belongs to the acetylglutamate kinase family. ArgB subfamily.

The protein localises to the cytoplasm. The catalysed reaction is N-acetyl-L-glutamate + ATP = N-acetyl-L-glutamyl 5-phosphate + ADP. Its pathway is amino-acid biosynthesis; L-arginine biosynthesis; N(2)-acetyl-L-ornithine from L-glutamate: step 2/4. Functionally, catalyzes the ATP-dependent phosphorylation of N-acetyl-L-glutamate. The chain is Acetylglutamate kinase from Rhodospirillum centenum (strain ATCC 51521 / SW).